The primary structure comprises 590 residues: MGIIDNFKSFVHSITTEDHYASYDSPYKNSAVNNVGTTVGGGNSSSRLHELNRLATVNSSSHSLIEGGNNGSRTSLSRNGSSTTVGYRPGLRSSNTNSSELQLQNLNASGQPPLPSIDSLWDRIESWLEEEYPELGDNLNDGVTTADLNEFENDLGCGSLPVEIRQFYKRHDGQFRGGKPTGLVMGLTLLDLEGIIEEYAIWAKVNQRLEKQQYMFQHQQQQQQHQKATSSADASETHGHENKINNSFIANQKSIPPNAIQPYYAHRGWIPFLKDFCGNQIAIDLAPGPQGHWGQIIIFGRDYDTKLVIASNLQEFMFGFVSDLELGNFQIDQNDQDGGFLDGSRNDDDYMIGDGEEDQGELCFRDREQKEFGNSIKGKLTYLEVLKRRALKTFGITNLEKFSTSFTPQRMPHAKPNASGMASPVRAASPSMSGATANTNKSQNPLINMESSSKVALPKETLIDEDEKVPEEPVKKSEVKSVKNTAAAEPEKETKQKDEIIEEKPEVIETPAKEDDKEEEEEEQEEEKEQEKEHENEEAPEDEQNEDAKPLTKTQKKNQSKKAKKQQQKQKQNETNDVEEVAEDLNDVAL.

Disordered regions lie at residues 59-97 (SSSHSLIEGGNNGSRTSLSRNGSSTTVGYRPGLRSSNTN), 216-239 (FQHQQQQQQHQKATSSADASETHG), and 407-590 (TPQR…DVAL). Residues 71–85 (GSRTSLSRNGSSTTV) show a composition bias toward polar residues. The segment covering 217–226 (QHQQQQQQHQ) has biased composition (low complexity). Positions 430–454 (PSMSGATANTNKSQNPLINMESSSK) are enriched in polar residues. Basic and acidic residues-rich tracts occupy residues 470-481 (PEEPVKKSEVKS) and 489-515 (EPEKETKQKDEIIEEKPEVIETPAKED). Over residues 516–528 (DKEEEEEEQEEEK) the composition is skewed to acidic residues. The segment covering 554 to 568 (TQKKNQSKKAKKQQQ) has biased composition (basic residues). A compositionally biased stretch (acidic residues) spans 576 to 590 (NDVEEVAEDLNDVAL).

It belongs to the KNR4/SMI1 family.

In Debaryomyces hansenii (strain ATCC 36239 / CBS 767 / BCRC 21394 / JCM 1990 / NBRC 0083 / IGC 2968) (Yeast), this protein is KNR4/SMI1 homolog 2.